The sequence spans 198 residues: Probable GTP-binding protein EngB (198 aa).

Positions 36–198 constitute an EngB-type G domain; the sequence is SDPQFAFIGR…NLSKLQELLE (163 aa). GTP is bound by residues 44–51, 70–74, 88–91, 155–158, and 182–184; these read GRSNVGKS, GRTQL, DLPG, NKID, and ISA. The Mg(2+) site is built by serine 51 and threonine 72.

This sequence belongs to the TRAFAC class TrmE-Era-EngA-EngB-Septin-like GTPase superfamily. EngB GTPase family. Mg(2+) is required as a cofactor.

In terms of biological role, necessary for normal cell division and for the maintenance of normal septation. The chain is Probable GTP-binding protein EngB from Mesomycoplasma hyopneumoniae (strain 7448) (Mycoplasma hyopneumoniae).